The following is a 775-amino-acid chain: Suppressor of glycerol defect protein 1 (775 aa).

Composition is skewed to basic residues over residues 1-11 and 28-49; these read MRPIKKSRSLK and RRGKRNHNLPHREKRKFARISR. Disordered stretches follow at residues 1–101 and 152–253; these read MRPI…LLDP and IDDI…GGDK. 3 stretches are compositionally biased toward basic and acidic residues: residues 52-79, 177-193, and 209-223; these read NGYENRKITEEGDSKSSELNDDYLDAHR, TGDHGSVDELESEREGN, and DEFHQPETKPIRMDP. The 202-residue stretch at 262 to 463 folds into the MIF4G domain; it reads RRKLQGSLNK…ESITNLKENK (202 aa). The 125-residue stretch at 565–689 folds into the MI domain; sequence TLRTSIFVAL…PLTILKHVDF (125 aa).

This sequence belongs to the CWC22 family.

The protein localises to the nucleus. Its subcellular location is the nucleolus. Functionally, involved in osmoregulatory glycerol response. The sequence is that of Suppressor of glycerol defect protein 1 (sgd1) from Schizosaccharomyces pombe (strain 972 / ATCC 24843) (Fission yeast).